A 311-amino-acid polypeptide reads, in one-letter code: Methionyl-tRNA formyltransferase (311 aa).

Position 110-113 (110-113 (SLLP)) interacts with (6S)-5,6,7,8-tetrahydrofolate.

It belongs to the Fmt family.

The catalysed reaction is L-methionyl-tRNA(fMet) + (6R)-10-formyltetrahydrofolate = N-formyl-L-methionyl-tRNA(fMet) + (6S)-5,6,7,8-tetrahydrofolate + H(+). In terms of biological role, attaches a formyl group to the free amino group of methionyl-tRNA(fMet). The formyl group appears to play a dual role in the initiator identity of N-formylmethionyl-tRNA by promoting its recognition by IF2 and preventing the misappropriation of this tRNA by the elongation apparatus. The sequence is that of Methionyl-tRNA formyltransferase from Streptococcus pyogenes serotype M28 (strain MGAS6180).